We begin with the raw amino-acid sequence, 843 residues long: Glycogen phosphorylase, brain form (843 aa).

At alanine 2 the chain carries N-acetylalanine. A Phosphoserine; by PHK; in form phosphorylase A modification is found at serine 15. The AMP site is built by aspartate 43, tyrosine 197, and arginine 310. Tyrosine 197 carries the post-translational modification Phosphotyrosine. The residue at position 473 (tyrosine 473) is a Phosphotyrosine. Lysine 569 is a pyridoxal 5'-phosphate binding site. A pyridoxal 5'-phosphate region spans residues 677 to 678 (TG). Position 681 is an N6-(pyridoxal phosphate)lysine (lysine 681).

Belongs to the glycogen phosphorylase family. In terms of assembly, homodimer. Dimers associate into a tetramer to form the enzymatically active phosphorylase A. Pyridoxal 5'-phosphate serves as cofactor. In terms of processing, phosphorylated. Phosphorylation of Ser-15 converts phosphorylase B (unphosphorylated) to phosphorylase A.

The enzyme catalyses [(1-&gt;4)-alpha-D-glucosyl](n) + phosphate = [(1-&gt;4)-alpha-D-glucosyl](n-1) + alpha-D-glucose 1-phosphate. With respect to regulation, activity of phosphorylase is controlled both by allosteric means (through the non-covalent binding of metabolites) and by covalent modification. Thus AMP allosterically activates, whereas ATP, ADP, and glucose-6-phosphate allosterically inhibit, phosphorylase B. Activated upon phosphorylation. Functionally, glycogen phosphorylase that regulates glycogen mobilization. Phosphorylase is an important allosteric enzyme in carbohydrate metabolism. Enzymes from different sources differ in their regulatory mechanisms and in their natural substrates. However, all known phosphorylases share catalytic and structural properties. The sequence is that of Glycogen phosphorylase, brain form from Homo sapiens (Human).